The primary structure comprises 356 residues: Phosphoribosylformylglycinamidine cyclo-ligase (356 aa).

This sequence belongs to the AIR synthase family.

Its subcellular location is the cytoplasm. It carries out the reaction 2-formamido-N(1)-(5-O-phospho-beta-D-ribosyl)acetamidine + ATP = 5-amino-1-(5-phospho-beta-D-ribosyl)imidazole + ADP + phosphate + H(+). The protein operates within purine metabolism; IMP biosynthesis via de novo pathway; 5-amino-1-(5-phospho-D-ribosyl)imidazole from N(2)-formyl-N(1)-(5-phospho-D-ribosyl)glycinamide: step 2/2. This chain is Phosphoribosylformylglycinamidine cyclo-ligase, found in Sinorhizobium fredii (strain NBRC 101917 / NGR234).